Consider the following 411-residue polypeptide: Zinc metalloproteinase/disintegrin (411 aa).

An N-terminal signal peptide occupies residues 1-20; that stretch reads MIEVLLVTICLAVFPYQGSS. The propeptide occupies 21 to 190; the sequence is IILESGNVND…KASQLYLTPE (170 aa). Residues 197–395 enclose the Peptidase M12B domain; that stretch reads RYVKLAIVVD…SKPQCILNAP (199 aa). A Ca(2+)-binding site is contributed by aspartate 284. Disulfide bonds link cysteine 308–cysteine 390, cysteine 352–cysteine 374, and cysteine 354–cysteine 357. Zn(2+) is bound at residue histidine 333. Glutamate 334 is an active-site residue. Zn(2+) contacts are provided by histidine 337 and histidine 343. Ca(2+) contacts are provided by cysteine 390 and asparagine 393. The propeptide occupies 396 to 411; the sequence is LRTDTVSTPVSGNEPL.

Belongs to the venom metalloproteinase (M12B) family. P-II subfamily. As to quaternary structure, monomer. The cofactor is Zn(2+). As to expression, expressed by the venom gland.

It localises to the secreted. Functionally, snake venom metalloproteinase that impairs hemostasis in the envenomed animal. The chain is Zinc metalloproteinase/disintegrin from Protobothrops mucrosquamatus (Taiwan habu).